The sequence spans 213 residues: Orotate phosphoribosyltransferase (213 aa).

Residue Lys-26 coordinates 5-phospho-alpha-D-ribose 1-diphosphate. 34–35 (FF) serves as a coordination point for orotate. Residues 72–73 (YK), Arg-99, Lys-100, Lys-103, His-105, and 124–132 (DDVITAGTA) contribute to the 5-phospho-alpha-D-ribose 1-diphosphate site. Thr-128 and Arg-156 together coordinate orotate.

It belongs to the purine/pyrimidine phosphoribosyltransferase family. PyrE subfamily. As to quaternary structure, homodimer. It depends on Mg(2+) as a cofactor.

The enzyme catalyses orotidine 5'-phosphate + diphosphate = orotate + 5-phospho-alpha-D-ribose 1-diphosphate. Its pathway is pyrimidine metabolism; UMP biosynthesis via de novo pathway; UMP from orotate: step 1/2. Catalyzes the transfer of a ribosyl phosphate group from 5-phosphoribose 1-diphosphate to orotate, leading to the formation of orotidine monophosphate (OMP). The protein is Orotate phosphoribosyltransferase of Thioalkalivibrio sulfidiphilus (strain HL-EbGR7).